The sequence spans 435 residues: Ribulose bisphosphate carboxylase-like protein (435 aa).

Positions 198, 200, and 201 each coordinate Mg(2+). Position 198 is an N6-carboxylysine (lysine 198).

This sequence belongs to the RuBisCO large chain family. Type IV subfamily. In terms of assembly, homodimer. Requires Mg(2+) as cofactor.

May be involved in sulfur metabolism and oxidative stress response. Does not show RuBisCO activity. In Chlorobaculum tepidum (strain ATCC 49652 / DSM 12025 / NBRC 103806 / TLS) (Chlorobium tepidum), this protein is Ribulose bisphosphate carboxylase-like protein.